The sequence spans 314 residues: 4-hydroxy-3-methylbut-2-enyl diphosphate reductase (314 aa).

Cys-12 lines the [4Fe-4S] cluster pocket. (2E)-4-hydroxy-3-methylbut-2-enyl diphosphate contacts are provided by His-43 and His-81. His-43 and His-81 together coordinate dimethylallyl diphosphate. Isopentenyl diphosphate-binding residues include His-43 and His-81. Cys-103 is a binding site for [4Fe-4S] cluster. His-131 is a (2E)-4-hydroxy-3-methylbut-2-enyl diphosphate binding site. His-131 lines the dimethylallyl diphosphate pocket. An isopentenyl diphosphate-binding site is contributed by His-131. Residue Glu-133 is the Proton donor of the active site. Thr-170 contributes to the (2E)-4-hydroxy-3-methylbut-2-enyl diphosphate binding site. Cys-198 lines the [4Fe-4S] cluster pocket. The (2E)-4-hydroxy-3-methylbut-2-enyl diphosphate site is built by Ser-226, Asn-228, and Ser-271. 3 residues coordinate dimethylallyl diphosphate: Ser-226, Asn-228, and Ser-271. Positions 226, 228, and 271 each coordinate isopentenyl diphosphate.

The protein belongs to the IspH family. [4Fe-4S] cluster serves as cofactor.

It catalyses the reaction isopentenyl diphosphate + 2 oxidized [2Fe-2S]-[ferredoxin] + H2O = (2E)-4-hydroxy-3-methylbut-2-enyl diphosphate + 2 reduced [2Fe-2S]-[ferredoxin] + 2 H(+). The enzyme catalyses dimethylallyl diphosphate + 2 oxidized [2Fe-2S]-[ferredoxin] + H2O = (2E)-4-hydroxy-3-methylbut-2-enyl diphosphate + 2 reduced [2Fe-2S]-[ferredoxin] + 2 H(+). The protein operates within isoprenoid biosynthesis; dimethylallyl diphosphate biosynthesis; dimethylallyl diphosphate from (2E)-4-hydroxy-3-methylbutenyl diphosphate: step 1/1. It functions in the pathway isoprenoid biosynthesis; isopentenyl diphosphate biosynthesis via DXP pathway; isopentenyl diphosphate from 1-deoxy-D-xylulose 5-phosphate: step 6/6. Its function is as follows. Catalyzes the conversion of 1-hydroxy-2-methyl-2-(E)-butenyl 4-diphosphate (HMBPP) into a mixture of isopentenyl diphosphate (IPP) and dimethylallyl diphosphate (DMAPP). Acts in the terminal step of the DOXP/MEP pathway for isoprenoid precursor biosynthesis. In Bacillus velezensis (strain DSM 23117 / BGSC 10A6 / LMG 26770 / FZB42) (Bacillus amyloliquefaciens subsp. plantarum), this protein is 4-hydroxy-3-methylbut-2-enyl diphosphate reductase.